The primary structure comprises 367 residues: Peptide chain release factor 1 (367 aa).

At Gln-238 the chain carries N5-methylglutamine.

The protein belongs to the prokaryotic/mitochondrial release factor family. Methylated by PrmC. Methylation increases the termination efficiency of RF1.

It localises to the cytoplasm. Its function is as follows. Peptide chain release factor 1 directs the termination of translation in response to the peptide chain termination codons UAG and UAA. This is Peptide chain release factor 1 from Dictyoglomus thermophilum (strain ATCC 35947 / DSM 3960 / H-6-12).